The sequence spans 697 residues: Tryptophan synthase (697 aa).

The interval 1–298 is tryptophan synthase alpha chain; that stretch reads MTEQIKKTFL…AVVEPINEMY (298 aa). Catalysis depends on proton acceptor residues E50 and D61. The segment at 298 to 697 is tryptophan synthase beta chain; sequence YLPQKYGMFG…GPKIGWDLRF (400 aa). N6-(pyridoxal phosphate)lysine is present on K381.

In the N-terminal section; belongs to the TrpA family. The protein in the C-terminal section; belongs to the TrpB family. It depends on pyridoxal 5'-phosphate as a cofactor.

The catalysed reaction is (1S,2R)-1-C-(indol-3-yl)glycerol 3-phosphate + L-serine = D-glyceraldehyde 3-phosphate + L-tryptophan + H2O. Its pathway is amino-acid biosynthesis; L-tryptophan biosynthesis; L-tryptophan from chorismate: step 5/5. This is Tryptophan synthase (trp2) from Schizosaccharomyces pombe (strain 972 / ATCC 24843) (Fission yeast).